The sequence spans 82 residues: Putative defensin-like protein 70 (82 aa).

Positions 1–27 are cleaved as a signal peptide; the sequence is MKMESSKMLVVFTLMVLIAVSSDLVSG. 4 disulfides stabilise this stretch: cysteine 39-cysteine 80, cysteine 43-cysteine 66, cysteine 52-cysteine 78, and cysteine 56-cysteine 79.

It belongs to the DEFL family.

The protein resides in the secreted. This Arabidopsis thaliana (Mouse-ear cress) protein is Putative defensin-like protein 70 (LCR83).